A 361-amino-acid polypeptide reads, in one-letter code: Phosphoserine aminotransferase (361 aa).

Arg-43 provides a ligand contact to L-glutamate. Positions 103, 153, 173, and 196 each coordinate pyridoxal 5'-phosphate. At Lys-197 the chain carries N6-(pyridoxal phosphate)lysine. 238 to 239 (NT) provides a ligand contact to pyridoxal 5'-phosphate.

It belongs to the class-V pyridoxal-phosphate-dependent aminotransferase family. SerC subfamily. Homodimer. Pyridoxal 5'-phosphate serves as cofactor.

Its subcellular location is the cytoplasm. The enzyme catalyses O-phospho-L-serine + 2-oxoglutarate = 3-phosphooxypyruvate + L-glutamate. It catalyses the reaction 4-(phosphooxy)-L-threonine + 2-oxoglutarate = (R)-3-hydroxy-2-oxo-4-phosphooxybutanoate + L-glutamate. It functions in the pathway amino-acid biosynthesis; L-serine biosynthesis; L-serine from 3-phospho-D-glycerate: step 2/3. The protein operates within cofactor biosynthesis; pyridoxine 5'-phosphate biosynthesis; pyridoxine 5'-phosphate from D-erythrose 4-phosphate: step 3/5. Catalyzes the reversible conversion of 3-phosphohydroxypyruvate to phosphoserine and of 3-hydroxy-2-oxo-4-phosphonooxybutanoate to phosphohydroxythreonine. This Hahella chejuensis (strain KCTC 2396) protein is Phosphoserine aminotransferase.